The sequence spans 810 residues: Zinc finger CCCH domain-containing protein 11A (810 aa).

C3H1-type zinc fingers lie at residues 2–29 (PNQGEDCYFFFYSTCTKGDSCPFRHCEA), 31–57 (IGNETVCTLWQEGRCFRQVCRFRHMEI), and 60–86 (KRSEIPCYWENQPTGCQKLNCAFHHNR). The residue at position 108 (Ser108) is a Phosphoserine. Residues Lys114 and Lys124 each participate in a glycyl lysine isopeptide (Lys-Gly) (interchain with G-Cter in SUMO2) cross-link. Ser132 is modified (phosphoserine). 4 disordered regions span residues 139–194 (MKVE…GLRV), 223–258 (KKMKEKSKKQGEGSSGVSSLLLHPEPVPGPEKENVR), 285–351 (GKRK…DKVN), and 367–432 (ERAS…TTCI). A Glycyl lysine isopeptide (Lys-Gly) (interchain with G-Cter in SUMO2) cross-link involves residue Lys140. A phosphoserine mark is found at Ser149 and Ser171. A compositionally biased stretch (acidic residues) spans 160–175 (ADDDEDDDDQFSEEGD). A Phosphoserine modification is found at Ser290. Composition is skewed to basic and acidic residues over residues 309-322 (KKVEAPETNIDKTP) and 367-390 (ERASQKRGELQTKLKTEGPSKTDD). At Thr321 the chain carries Phosphothreonine. A coiled-coil region spans residues 362-423 (EEILLERASQ…KHRQQEAERQ (62 aa)). The residue at position 370 (Ser370) is a Phosphoserine. Over residues 391–402 (STSGARSSSTIR) the composition is skewed to polar residues. The span at 417–432 (QQEAERQKSKKDTTCI) shows a compositional bias: basic and acidic residues. A Glycyl lysine isopeptide (Lys-Gly) (interchain with G-Cter in SUMO2) cross-link involves residue Lys478. The disordered stretch occupies residues 482 to 549 (ALRVQQSSES…KEASGETTGV (68 aa)). The span at 486–498 (QQSSESSTSSPSQ) shows a compositional bias: low complexity. A Glycyl lysine isopeptide (Lys-Gly) (interchain with G-Cter in SUMO2) cross-link involves residue Lys619. Residues 715–768 (TVPEAENPRDSLVLPPTQSSSDSSPPEVSGPSSSQMSMKTRRLSSASTGKPPLS) are disordered. Over residues 729–748 (PPTQSSSDSSPPEVSGPSSS) the composition is skewed to low complexity. The segment covering 749-762 (QMSMKTRRLSSAST) has biased composition (polar residues).

Interacts with TREX complex components THOC2, DDX39 and POLDIP3; the interactions are ATP-dependent. Interacts with PABPN1; this interaction retains ZC3H11A in nuclear speckles. Interacts with KPNA3.

The protein localises to the nucleus. Its subcellular location is the nucleus speckle. In terms of biological role, through its association with TREX complex components, may participate in the export and post-transcriptional coordination of selected mRNA transcripts, including those required to maintain the metabolic processes in embryonic cells. Binds RNA. (Microbial infection) Plays a role in efficient growth of several nuclear-replicating viruses such as HIV-1, influenza virus or herpes simplex virus 1/HHV-1. Required for efficient viral mRNA export. May be required for proper polyadenylation of adenovirus type 5/HAdV-5 capsid mRNA. This is Zinc finger CCCH domain-containing protein 11A (ZC3H11A) from Homo sapiens (Human).